A 122-amino-acid polypeptide reads, in one-letter code: Large ribosomal subunit protein uL14 (122 aa).

It belongs to the universal ribosomal protein uL14 family. Part of the 50S ribosomal subunit. Forms a cluster with proteins L3 and L19. In the 70S ribosome, L14 and L19 interact and together make contacts with the 16S rRNA in bridges B5 and B8.

Binds to 23S rRNA. Forms part of two intersubunit bridges in the 70S ribosome. This chain is Large ribosomal subunit protein uL14, found in Halothermothrix orenii (strain H 168 / OCM 544 / DSM 9562).